A 79-amino-acid polypeptide reads, in one-letter code: U-actitoxin-Avd9d (79 aa).

An N-terminal signal peptide occupies residues asparagine 1–alanine 19. Residues glutamate 20–leucine 37 constitute a propeptide that is removed on maturation. One can recognise a ShKT domain in the interval cysteine 44–cysteine 79. 3 disulfides stabilise this stretch: cysteine 44–cysteine 79, cysteine 53–cysteine 72, and cysteine 62–cysteine 76. Residues lysine 67–tyrosine 68 form a crucial for binding to potassium channels region.

It belongs to the sea anemone type 1 potassium channel toxin family. Type 1b subfamily.

The protein localises to the secreted. The protein resides in the nematocyst. In terms of biological role, inhibits voltage-gated potassium channels (Kv1/KCNA). The protein is U-actitoxin-Avd9d of Anemonia viridis (Snakelocks anemone).